The chain runs to 134 residues: uncharacterized protein (134 aa).

This is an uncharacterized protein from Homo sapiens (Human).